Consider the following 1141-residue polypeptide: Translocase of chloroplast 125, chloroplastic (1141 aa).

2 disordered regions span residues M1–Y177 and G325–E431. Basic and acidic residues-rich tracts occupy residues R57–G72 and I107–L121. Residues Y132 to E150 show a composition bias toward acidic residues. The span at S151–N167 shows a compositional bias: low complexity. Positions E328–I353 are enriched in acidic residues. Low complexity-rich tracts occupy residues R389–T401 and T408–A429. Residues D505–K734 enclose the AIG1-type G domain. Residues G514 to S521 are G1. Residue G517–A522 coordinates GTP. S521 lines the Mg(2+) pocket. A G2 region spans residues S541 to V545. The segment at D561–G564 is G3. A G4 region spans residues T633–S636. GTP is bound by residues H634 and E682–N683. A G5 region spans residues E682 to H684. Disordered regions lie at residues Q758 to P795 and I832 to M871. Over residues E770 to D789 the composition is skewed to acidic residues. Over residues I832–Q841 the composition is skewed to basic residues. Residues M1116–G1136 form a helical membrane-spanning segment.

It belongs to the TRAFAC class TrmE-Era-EngA-EngB-Septin-like GTPase superfamily. AIG1/Toc34/Toc159-like paraseptin GTPase family. TOC159 subfamily. Part of the TOC core complex. The cofactor is Mg(2+).

Its subcellular location is the plastid. The protein localises to the chloroplast outer membrane. Its function is as follows. GTPase involved in protein precursor import into chloroplasts. Seems to recognize chloroplast-destined precursor proteins and regulate their presentation to the translocation channel through GTP hydrolysis. Probably specialized in the import of nuclear encoded non-photosynthetic preproteins from the cytoplasm to the chloroplast. This chain is Translocase of chloroplast 125, chloroplastic, found in Physcomitrium patens (Spreading-leaved earth moss).